Reading from the N-terminus, the 115-residue chain is Nucleoid-associated protein PMN2A_1347 (115 aa).

Residues 89 to 115 (STSTMKERMEDLTGGFKLNLPGMGEEN) are disordered.

This sequence belongs to the YbaB/EbfC family. As to quaternary structure, homodimer.

It localises to the cytoplasm. It is found in the nucleoid. Binds to DNA and alters its conformation. May be involved in regulation of gene expression, nucleoid organization and DNA protection. The protein is Nucleoid-associated protein PMN2A_1347 of Prochlorococcus marinus (strain NATL2A).